Consider the following 200-residue polypeptide: 3-isopropylmalate dehydratase small subunit (200 aa).

It belongs to the LeuD family. LeuD type 1 subfamily. As to quaternary structure, heterodimer of LeuC and LeuD.

It catalyses the reaction (2R,3S)-3-isopropylmalate = (2S)-2-isopropylmalate. Its pathway is amino-acid biosynthesis; L-leucine biosynthesis; L-leucine from 3-methyl-2-oxobutanoate: step 2/4. Functionally, catalyzes the isomerization between 2-isopropylmalate and 3-isopropylmalate, via the formation of 2-isopropylmaleate. The protein is 3-isopropylmalate dehydratase small subunit of Vibrio vulnificus (strain CMCP6).